We begin with the raw amino-acid sequence, 611 residues long: Zinc metalloproteinase-disintegrin-like ohanin (611 aa).

Residues 1–20 form the signal peptide; the sequence is MIQVLLVTICLVVFPYQGSS. Residues 21-187 constitute a propeptide that is removed on maturation; sequence IILESGKVND…WESDEPIEKI (167 aa). A Peptidase M12B domain is found at 198–393; it reads KYLELYIVAD…DTPQCLINKP (196 aa). 2 N-linked (GlcNAc...) asparagine glycosylation sites follow: Asn217 and Asn260. 3 disulfide bridges follow: Cys307/Cys388, Cys347/Cys372, and Cys349/Cys354. Position 332 (His332) interacts with Zn(2+). Residue Glu333 is part of the active site. His336 and His342 together coordinate Zn(2+). The N-linked (GlcNAc...) asparagine glycan is linked to Asn395. Positions 401–487 constitute a Disintegrin domain; that stretch reads NAVCGNYVEE…ECPMDRFHKN (87 aa). Cystine bridges form between Cys404/Cys433, Cys415/Cys428, Cys417/Cys423, Cys427/Cys450, Cys441/Cys447, Cys446/Cys472, Cys459/Cys479, Cys466/Cys498, Cys491/Cys503, Cys510/Cys560, Cys525/Cys578, Cys538/Cys548, Cys555/Cys603, and Cys597/Cys608. Residues 465 to 467 carry the D/ECD-tripeptide motif; the sequence is ECD. N-linked (GlcNAc...) asparagine glycosylation is present at Asn528.

It belongs to the venom metalloproteinase (M12B) family. P-III subfamily. P-IIIa sub-subfamily. In terms of assembly, monomer. The cofactor is Zn(2+). In terms of tissue distribution, expressed by the venom gland.

The protein localises to the secreted. Inhibited by EDTA, but not by PMSF. Snake venom zinc metalloproteinase that has hemorrhagic activity. Inhibits ADP-, TMVA- and stejnulxin-induced platelet aggregation in a dose-dependent manner (on washed platelet, but not on platelet rich plasm). Also specifically degrades alpha-chain of fibrinogen (FGA). This is Zinc metalloproteinase-disintegrin-like ohanin from Ophiophagus hannah (King cobra).